A 362-amino-acid polypeptide reads, in one-letter code: tRNA-specific 2-thiouridylase MnmA (362 aa).

ATP contacts are provided by residues 6–13 (AMSGGVDS) and Leu32. Cys101 (nucleophile) is an active-site residue. The cysteines at positions 101 and 197 are disulfide-linked. An ATP-binding site is contributed by Gly125. An interaction with tRNA region spans residues 147 to 149 (KDQ). Cys197 functions as the Cysteine persulfide intermediate in the catalytic mechanism.

Belongs to the MnmA/TRMU family.

Its subcellular location is the cytoplasm. The catalysed reaction is S-sulfanyl-L-cysteinyl-[protein] + uridine(34) in tRNA + AH2 + ATP = 2-thiouridine(34) in tRNA + L-cysteinyl-[protein] + A + AMP + diphosphate + H(+). Its function is as follows. Catalyzes the 2-thiolation of uridine at the wobble position (U34) of tRNA, leading to the formation of s(2)U34. This is tRNA-specific 2-thiouridylase MnmA from Acidothermus cellulolyticus (strain ATCC 43068 / DSM 8971 / 11B).